The primary structure comprises 386 residues: Phosphoglycerate kinase (386 aa).

Substrate-binding positions include 21–23 (DLN), arginine 36, 59–62 (HLGR), arginine 113, and arginine 146. Residues lysine 197, glutamate 314, and 340–343 (GGDT) contribute to the ATP site.

This sequence belongs to the phosphoglycerate kinase family. As to quaternary structure, monomer.

Its subcellular location is the cytoplasm. The enzyme catalyses (2R)-3-phosphoglycerate + ATP = (2R)-3-phospho-glyceroyl phosphate + ADP. It functions in the pathway carbohydrate degradation; glycolysis; pyruvate from D-glyceraldehyde 3-phosphate: step 2/5. This Vibrio vulnificus (strain CMCP6) protein is Phosphoglycerate kinase.